Consider the following 278-residue polypeptide: E3 ubiquitin-protein ligase MARCHF5 (278 aa).

Residues 6-75 form an RING-CH-type zinc finger; that stretch reads LQQMLDRSCW…PQCNAEYLIV (70 aa). 8 residues coordinate Zn(2+): Cys-14, Cys-17, Cys-33, Cys-35, His-43, Cys-46, Cys-65, and Cys-68. Helical transmembrane passes span 99–119, 139–159, 209–229, and 238–258; these read FAAA…YGAV, PLFL…GKMI, ILCG…LMFS, and TILG…YFKQ.

As to quaternary structure, monomer and homodimer. Interacts with MFN1, MFN2, DNM1L and FIS1. Post-translationally, autoubiquitinated leading to degradation (short half-life).

The protein resides in the mitochondrion outer membrane. It catalyses the reaction S-ubiquitinyl-[E2 ubiquitin-conjugating enzyme]-L-cysteine + [acceptor protein]-L-lysine = [E2 ubiquitin-conjugating enzyme]-L-cysteine + N(6)-ubiquitinyl-[acceptor protein]-L-lysine.. The protein operates within protein modification; protein ubiquitination. Its function is as follows. Mitochondrial E3 ubiquitin-protein ligase that plays a crucial role in the control of mitochondrial morphology by acting as a positive regulator of mitochondrial fission and as an important regulator of immune response. Plays a crucial role in maintaining mitochondrial homeostasis by regulating the dynamics of mitochondria through the ubiquitination of key proteins involved in fission and fusion such as FIS1, DNM1L and MFN1. Acts as a critical determinant of mitotic apoptosis through both MCL1-dependent and -independent pathways. Turns off persistent immune signaling by degrading oligomeric complexes of retinoic acid-inducible gene I/DDX58 and mitochondrial antiviral-signaling protein/MAVS formed upon RNA virus infection. Promotes STING-mediated type-I interferon production via 'Lys-63'-linked ubiquitination of STING1 thereby preserving its activity and preventing the formation of inactive STING1 polymers. Plays also an essential role in the formation of PEX3-containing vesicles in the de novo biogenesis of peroxisomes from mitochondria. Acts as a regulator of NLRP3 inflammasome activation on the mitochondria by mediating the 'Lys-27'-linked polyubiquitination of NLRP3, positively regulating the NLRP3-NEK7 complex formation and NLRP3 oligomerization. The chain is E3 ubiquitin-protein ligase MARCHF5 (MARCHF5) from Bos taurus (Bovine).